A 488-amino-acid chain; its full sequence is Katanin p60 ATPase-containing subunit A-like 1 (488 aa).

Residue Met-1 is modified to N-acetylmethionine. A disordered region spans residues 128-179; sequence GAGARGLVGRAHQISKSDKAASRDKDYRARGRDDKARKNMQDGASDGEIPKF. Positions 142–167 are enriched in basic and acidic residues; the sequence is SKSDKAASRDKDYRARGRDDKARKNM. The residue at position 172 (Ser-172) is a Phosphoserine. 246 to 253 contributes to the ATP binding site; it reads GPPGTGKT.

It belongs to the AAA ATPase family. Katanin p60 subunit A1 subfamily. A-like 1 sub-subfamily. Interacts with KATNB1 and KATNBL1.

The protein resides in the cytoplasm. The protein localises to the cytoskeleton. Its subcellular location is the spindle pole. It localises to the spindle. The enzyme catalyses n ATP + n H2O + a microtubule = n ADP + n phosphate + (n+1) alpha/beta tubulin heterodimers.. Its function is as follows. Regulates microtubule dynamics in Sertoli cells, a process that is essential for spermiogenesis and male fertility. Severs microtubules in an ATP-dependent manner, promoting rapid reorganization of cellular microtubule arrays. Has microtubule-severing activity in vitro. In Rattus norvegicus (Rat), this protein is Katanin p60 ATPase-containing subunit A-like 1 (Katnal1).